The chain runs to 382 residues: S-adenosylmethionine synthase (382 aa).

His-15 lines the ATP pocket. A Mg(2+)-binding site is contributed by Asp-17. Glu-43 lines the K(+) pocket. Residues Glu-56 and Gln-99 each contribute to the L-methionine site. The flexible loop stretch occupies residues 99 to 109; the sequence is QSGDIAQGVDR. Residues 164-166, 230-231, Asp-239, 245-246, Ala-262, and Lys-266 contribute to the ATP site; these read DAK, KF, and RK. Asp-239 is an L-methionine binding site. Lys-270 is a binding site for L-methionine.

This sequence belongs to the AdoMet synthase family. Homotetramer; dimer of dimers. Mg(2+) is required as a cofactor. Requires K(+) as cofactor.

It localises to the cytoplasm. The catalysed reaction is L-methionine + ATP + H2O = S-adenosyl-L-methionine + phosphate + diphosphate. The protein operates within amino-acid biosynthesis; S-adenosyl-L-methionine biosynthesis; S-adenosyl-L-methionine from L-methionine: step 1/1. In terms of biological role, catalyzes the formation of S-adenosylmethionine (AdoMet) from methionine and ATP. The overall synthetic reaction is composed of two sequential steps, AdoMet formation and the subsequent tripolyphosphate hydrolysis which occurs prior to release of AdoMet from the enzyme. This Dichelobacter nodosus (strain VCS1703A) protein is S-adenosylmethionine synthase.